Consider the following 1856-residue polypeptide: MVDKNIYIIQGEINIVVGAIKRNARWSTHIPLDEERDPLLHSFSHLKEVLNSVTELSEIEPNVFLRPFLEVIRSEDTTGPITGLALTSVNKFLSYALIDPTHEGTAEGMENMADAVTHARFVGTDPASDEVVLMKILQVLRTLLLTPVGTHLTNESVCEIMQSCFRICFEMRLSELLRKSAEHTLVDMVQLLFTRLPQFKEEPKSYVGTNMKKLKMRAGGMSDSSKWKKQKRSPRPPRHMTRVTPGSELPAPNGATLSCNLTSGMPFIDVPSSISSASSEAASAVVSPCTDSGLELSSQTTSKEDLTDLEQAGSPRESTTTESGSNEIGVSDQLDPQEGSHVEKAQSASVESIPEVLEECTSPPDHSASVHDMDYVNPRGVRFTQSSQKEGTALVPYGLPCIRELFRFLISLTNPHDRHNSEGMIHMGLHLLTVALESAPVAQCQTLLGLIKDEMCRHLFQLLSVERLNLYAASLRVCFLLFESMREHLKFQLEMYMKKLMEIITVENPKMPYEMKEMALEAIVQLWRIPSFVTELYINYDCDYYCANLFEDLTKLLSKNAFPVSGQLYTTHLLSLDALLTVIDSTEAHCQAKVLNTLTQQEKKETSRPSYEAVDSTQEANSTERATIDGKATGMASDALGLHLQSGGWLSAEHGKPRCNDVEEAGDSGADKKFTRKPPRFSCLLPDPRELIEIKNKKKLLITGTEQFNQKPKKGIQFLQEKGLLTIPMDNTEVAQWLRENPRLDKKMIGEFVSDRKNIDLLESFVSTFSFQGLRLDEALRLYLEAFRLPGEAPVIHRLLEAFTEHWRSCNGSPFANSDACFALAYAVIMLNTDQHNHNVRKQNVPMTLEEFRKNLKGVNGGKDFEQDILEDMYHAIKNEEIVMPEEQTGLVRENYVWSVLLHRGATPEGIFLRVPPGSYDLDLFTMTWGPTIAALSYVFDKSIEETIIQKAISGFRKCAMISAHYGLSDVFDNLIISLCKFTALSSESIENLPTVFGSNPKAHIAAKTVFHLAHRHGDILREGWKNIMEAVLQLFRAQLLPQAMVEVEDFVDPNGKISLQREEMPSNRGESSVLSFVSWLTLSGPEQSSVRGPSTENQEAKRVALDCIKQCDPEKMITESKFLQLESLQELMKALVSVTADEETYDEEDAAFCLEMLLRIVLENRDRVGCVWQTVRDHLYHLCVQAQDFCFLVERAVVGLLRLAIRLLRREEISGQVLLSLRILLLMKPSVLSRVSHQVAYGLHELLKTNAANIHSGDDWATLFTLLECIGSGVKPPDALQATARADAPDAGAQSDSELPSYHQNDVSLDRGYTSDSEVYTDHGRPGKIHRSATDADMVNSGWLVVGKDDIDNSKAGAGLSRPSPSPLVNQYSLTVGLDLGPHDTKSLLKCVESLSFIVRDAAHITPDNFELCVKTLRIFVEASLNGGCKSQDKRGKSHKYDSKGNRFKKKPKEGSVLRRPRTSSQHGTRGGHSDEEEDEGVPASYHTVSLQVSQDLLDLMHTLHTRAASIYSSWAEEQRHLESGGRKIEADSRTLWAHCWCPLLQGIACLCCDARRQVRMQALTYLQRALLVHDLQKLDALEWESCFNKVLFPLLTKLLENISPADVGGMEETRMRASTLLSKVFLQHLSPLLSLSTFAALWLTILDFMDKYMHAGSSDLLSEAIPESLKNMLLVMDTAEIFHSADARGGSPSALWEITWERIDCFLPHLRDELFKQTVIQDPMPTEPHSQNALASTHLTPAAGDPGHLPSPEIPSEVGACDSEKPEGTRATSSSSPGSPVASSPSRLSPSPEGPPPLAQPPLILQPLTSPLQVGVPPMALPIILNPALIEATSPVPLLSTPRPTDPIPTSEVN.

Residues 1–211 (MVDKNIYIIQ…EPKSYVGTNM (211 aa)) form a DCB (dimerization and cyclophiln-binding); DCB:DCB domain and DCB:HUS domain interaction region. The segment at 1–378 (MVDKNIYIIQ…SVHDMDYVNP (378 aa)) is interaction with RAB1B. Disordered stretches follow at residues 215–256 (KMRA…NGAT) and 291–370 (DSGL…SASV). The segment covering 227–241 (WKKQKRSPRPPRHMT) has biased composition (basic residues). Positions 316-328 (RESTTTESGSNEI) are enriched in polar residues. A phosphoserine mark is found at serine 349 and serine 352. Threonine 505 carries the phosphothreonine modification. The interval 528 to 548 (RIPSFVTELYINYDCDYYCAN) is HUS (homology upstream of Sec7); DCB:HUS domain interaction. Positions 601–626 (QEKKETSRPSYEAVDSTQEANSTERA) are disordered. A compositionally biased stretch (polar residues) spans 615–625 (DSTQEANSTER). The SEC7 domain maps to 690–880 (ELIEIKNKKK…EDMYHAIKNE (191 aa)). Residues 884–1370 (MPEEQTGLVR…LSRPSPSPLV (487 aa)) are phosphatidylinositol-phosphate binding; required for translocation to the leading edge and for ARF1 activation upon GPCR signaling. A compositionally biased stretch (low complexity) spans 1284-1294 (TARADAPDAGA). The disordered stretch occupies residues 1284–1333 (TARADAPDAGAQSDSELPSYHQNDVSLDRGYTSDSEVYTDHGRPGKIHRS). A compositionally biased stretch (polar residues) spans 1295–1308 (QSDSELPSYHQNDV). Serine 1296 carries the phosphoserine modification. A Phosphotyrosine modification is found at tyrosine 1314. Phosphoserine is present on residues serine 1316, serine 1318, and serine 1333. Threonine 1335 carries the phosphothreonine; by AMPK modification. Disordered stretches follow at residues 1430-1484 (CKSQ…EGVP), 1739-1806 (THLT…PPLI), and 1837-1856 (PVPL…SEVN). The span at 1432–1446 (SQDKRGKSHKYDSKG) shows a compositional bias: basic and acidic residues. Phosphoserine is present on residues serine 1475 and serine 1781. Over residues 1775–1793 (SSSSPGSPVASSPSRLSPS) the composition is skewed to low complexity.

Can form homodimers and probably homotetramers. Interacts with COPG1; the interaction is independent on ARF1 activation. Interacts with ARF1, ARF3, ARF4 and ARF5. Interacts with RAB1B (GTP-bound form); required for GBF1 membrane association. Interacts with GGA1, GGA2 and GGA3. Interacts with USO1. Interacts (via SEC7 domain) with PNPLA2 (via C-terminus); the interaction is direct. Can form homodimers and probably homotetramers. Interacts with COPG1; the interaction is independent on ARF1 activation. Interacts with ARF1, ARF3, ARF4 and ARF5. Interacts with RAB1B (GTP-bound form); required for GBF1 membrane association. Interacts with GGA1, GGA2 and GGA3. Interacts with USO1. Interacts (via SEC7 domain) with PNPLA2 (via C-terminus); the interaction is direct. Interacts with ARMH3.

The protein resides in the golgi apparatus. The protein localises to the cis-Golgi network. It localises to the endoplasmic reticulum-Golgi intermediate compartment. It is found in the trans-Golgi network. Its subcellular location is the cytoplasm. The protein resides in the lipid droplet. The protein localises to the membrane. Its activity is regulated as follows. Inhibited by brefeldin A (BFA). Inhibited by golgicide A (GCA). Guanine-nucleotide exchange factor (GEF) for members of the Arf family of small GTPases involved in trafficking in the early secretory pathway; its GEF activity initiates the coating of nascent vesicles via the localized generation of activated ARFs through replacement of GDP with GTP. Recruitment to cis-Golgi membranes requires membrane association of Arf-GDP and can be regulated by ARF1, ARF3, ARF4 and ARF5. Involved in the recruitment of the COPI coat complex to cellular membranes such as the endoplasmic reticulum exit sites (ERES), and the endoplasmic reticulum-Golgi intermediate (ERGIC) and cis-Golgi compartments implicating ARF1 activation. Involved in COPI vesicle-dependent retrograde transport from the ERGIC and cis-Golgi compartments to the endoplasmic reticulum (ER). Involved in the trans-Golgi network recruitment of GGA1, GGA2, GGA3, BIG1, BIG2, and the AP-1 adaptor protein complex related to chlathrin-dependent transport; the function requires its GEF activity (probably at least in part on ARF4 and ARF5). Has GEF activity towards ARF1. Has in vitro GEF activity towards ARF5. Involved in the processing of PSAP. Required for the assembly of the Golgi apparatus. The AMPK-phosphorylated form is involved in Golgi disassembly during mitotis and under stress conditions. May be involved in the COPI vesicle-dependent recruitment of PNPLA2 to lipid droplets. In neutrophils, involved in G protein-coupled receptor (GPCR)-mediated chemotaxis und superoxide production. Proposed to be recruited by phosphatidylinositol-phosphates generated upon GPCR stimulation to the leading edge where it recruits and activates ARF1, and is involved in recruitment of GIT2 and the NADPH oxidase complex. Plays a role in maintaining mitochondrial morphology. The polypeptide is Golgi-specific brefeldin A-resistance guanine nucleotide exchange factor 1 (GBF1) (Cricetulus griseus (Chinese hamster)).